Consider the following 209-residue polypeptide: uncharacterized protein (209 aa).

A compositionally biased stretch (basic and acidic residues) spans 1–15 (MHRIDTKTAQKDKFG). The segment at 1–34 (MHRIDTKTAQKDKFGAGKNGFTRGNPQTGTPATD) is disordered. Over residues 22 to 31 (TRGNPQTGTP) the composition is skewed to polar residues.

It to E.coli YfdL and M.jannaschii MJ0347.

This is an uncharacterized protein from Escherichia coli (strain K12).